We begin with the raw amino-acid sequence, 182 residues long: MTHSWLLLTVLGCSAAMADSNNQALIDNAGKQYTGVLSVNQAAGNQHQQINSRAISLGGQASDALIQKLDGKVDPSLNASAAIQGSAFSNGNGILGVNQSAGANNQMINAVRISTGPQSVDDNVLSQQNMTLLPDSRSPSTTGSRQVVTSDQAFTGSRGVVQVNQSAGVGNRMANTLGVTIK.

A signal peptide spans 1–18; it reads MTHSWLLLTVLGCSAAMA. Residues 22–58 form a FapB_R1 repeat; it reads NQALIDNAGKQYTGVLSVNQAAGNQHQQINSRAISLG. The stretch at 80–114 is one FapB_R2 repeat; that stretch reads SAAIQGSAFSNGNGILGVNQSAGANNQMINAVRIS. A FapB_R3 repeat occupies 150-180; the sequence is SDQAFTGSRGVVQVNQSAGVGNRMANTLGVT.

Belongs to the FapB/FapC family. In terms of assembly, forms fibrils in vitro; in the presence of FapA the fibrils are slightly narrower. A minor component of purified amyloid fibrils. Fibrils are resistant to boiling in 2% (weight/vol) SDS and require &gt;90% (vol/vol) formic acid to dissolve.

The protein resides in the fimbrium. It is found in the secreted. Functionally, a minor component of the functional amyloid in this bacterium. Probably nucleates fibril formation; FapB nucleates fibrillation its own, FapA inhibits FapB fibril elongation. Upon overexpression of the endogenous six-gene locus (fapA-fapF) in situ, cells form large clumps during liquid growth, make large amounts of biofilm and produce amyloid fibrils. Expression of the 6 gene operon in E.coli strain BL21(DE3) induces flocculation and biofilm formation with copious extracellular fibrils. The chain is Functional amyloid subunit FapB from Pseudomonas fluorescens.